Consider the following 103-residue polypeptide: Carboxysome shell protein CcmK2 (103 aa).

Residues 4–90 (AVGMIETRGF…PHENLEYVLP (87 aa)) enclose the BMC domain.

It belongs to the bacterial microcompartments protein family. CcmK subfamily. As to quaternary structure, homohexamer, might also make dodecamers. Interacts with full-length CcmM. Forms mixed heterohexamers of all possible stoichiometries with CcmK1, which might form dodecamers. Only very weak interactions with CcmK3 and CcmK4 were seen.

Its subcellular location is the carboxysome. One of the shell proteins of the carboxysome, a polyhedral inclusion where RuBisCO (ribulose bisphosphate carboxylase, rbcL-rbcS) is sequestered. The central pore probably regulates metabolite flux. Hexamers make sheets that form the facets of the polyhedral carboxysome. The chain is Carboxysome shell protein CcmK2 from Synechocystis sp. (strain ATCC 27184 / PCC 6803 / Kazusa).